We begin with the raw amino-acid sequence, 240 residues long: Probable transcriptional regulatory protein Csal_0810 (240 aa).

Belongs to the TACO1 family.

The protein resides in the cytoplasm. The chain is Probable transcriptional regulatory protein Csal_0810 from Chromohalobacter salexigens (strain ATCC BAA-138 / DSM 3043 / CIP 106854 / NCIMB 13768 / 1H11).